A 95-amino-acid polypeptide reads, in one-letter code: Aspartyl/glutamyl-tRNA(Asn/Gln) amidotransferase subunit C (95 aa).

This sequence belongs to the GatC family. As to quaternary structure, heterotrimer of A, B and C subunits.

It carries out the reaction L-glutamyl-tRNA(Gln) + L-glutamine + ATP + H2O = L-glutaminyl-tRNA(Gln) + L-glutamate + ADP + phosphate + H(+). It catalyses the reaction L-aspartyl-tRNA(Asn) + L-glutamine + ATP + H2O = L-asparaginyl-tRNA(Asn) + L-glutamate + ADP + phosphate + 2 H(+). Functionally, allows the formation of correctly charged Asn-tRNA(Asn) or Gln-tRNA(Gln) through the transamidation of misacylated Asp-tRNA(Asn) or Glu-tRNA(Gln) in organisms which lack either or both of asparaginyl-tRNA or glutaminyl-tRNA synthetases. The reaction takes place in the presence of glutamine and ATP through an activated phospho-Asp-tRNA(Asn) or phospho-Glu-tRNA(Gln). The polypeptide is Aspartyl/glutamyl-tRNA(Asn/Gln) amidotransferase subunit C (Methylobacterium sp. (strain 4-46)).